The following is a 340-amino-acid chain: L-threonine 3-dehydrogenase (340 aa).

Cys-38 is a Zn(2+) binding site. Residues Thr-40 and His-43 each act as charge relay system in the active site. Residues His-63, Glu-64, Cys-93, Cys-96, Cys-99, and Cys-107 each coordinate Zn(2+). Residues Ile-175, Asp-195, Arg-200, 261 to 263, and 285 to 286 contribute to the NAD(+) site; these read LGI and IY.

The protein belongs to the zinc-containing alcohol dehydrogenase family. In terms of assembly, homotetramer. The cofactor is Zn(2+).

It localises to the cytoplasm. It carries out the reaction L-threonine + NAD(+) = (2S)-2-amino-3-oxobutanoate + NADH + H(+). It functions in the pathway amino-acid degradation; L-threonine degradation via oxydo-reductase pathway; glycine from L-threonine: step 1/2. Catalyzes the NAD(+)-dependent oxidation of L-threonine to 2-amino-3-ketobutyrate. The protein is L-threonine 3-dehydrogenase of Xanthomonas euvesicatoria pv. vesicatoria (strain 85-10) (Xanthomonas campestris pv. vesicatoria).